We begin with the raw amino-acid sequence, 483 residues long: MLTLDTLNVMLAVSEEGLIEEMIIALLASPQLAVFFEKFPRLKAAITDDVPRWREALRSRLKDARVPPELTEEVMCYQQSQLLSTPQFIVQLPQILDLLHRLNSPWAEQARQLVDANSTITSALHTLFLQRWRLSLIVQATTLNQQLLEEEREQLLSEVQERMTLSGQLEPILADNNTAAGRLWDMSAGQLKRGDYQLIVKYGEFLNEQPELKRLAEQLGRSREAKSIPRNDAQMETFRTMVREPATVPEQVDGLQQSDDILRLLPPELATLGITELEYEFYRRLVEKQLLTYRLHGESWREKMIERPVVHKDYDEQPRGPFIVCVDTSGSMGGFNEQCAKAFCLALMRIALAENRRCYIMLFSTEIVRYELSGPQGIEQAIRFLSQQFRGGTDLASCFRAIMERLQSREWFDADAVVISDFIAQRLPDDVTSKVKELQRVHQHRFHAVAMSAHGKPGIMRIFDHIWRFDTGMRSRLLRRWRR.

This sequence belongs to the ViaA family. In terms of assembly, homodimer. Interacts with RavA.

The protein resides in the cytoplasm. Functionally, component of the RavA-ViaA chaperone complex, which may act on the membrane to optimize the function of some of the respiratory chains. ViaA stimulates the ATPase activity of RavA. The chain is Regulatory protein ViaA from Escherichia coli O1:K1 / APEC.